We begin with the raw amino-acid sequence, 271 residues long: MSYLQDDKPVTLFELGKMRAEGRKIAMLTCYDASFAALLERNGVDVLLVGDSLGNVLQGQKSTLPVTLEQMAYHTECVVRGSSRPFVVTDMPFGSYQESPEQAMRNAARLMAAGAEMVKLEGGAFMAETVRFLVERGVPVCAHIGLTPQSVHQLGGYRVQGRSEEGAARLKADALALEQAGAALVVLEMVPAAVASDITRSLSTMATIGIGAGADCSGQVLVLHDMIGVYPGKKARFVKNFMEGAASIDAAVAAYVAAVKDGSFPAAEHCY.

2 residues coordinate Mg(2+): D51 and D90. 3-methyl-2-oxobutanoate is bound by residues 51–52, D90, and K119; that span reads DS. Position 121 (E121) interacts with Mg(2+). The active-site Proton acceptor is the E188.

The protein belongs to the PanB family. Homodecamer; pentamer of dimers. Mg(2+) serves as cofactor.

Its subcellular location is the cytoplasm. It catalyses the reaction 3-methyl-2-oxobutanoate + (6R)-5,10-methylene-5,6,7,8-tetrahydrofolate + H2O = 2-dehydropantoate + (6S)-5,6,7,8-tetrahydrofolate. It functions in the pathway cofactor biosynthesis; (R)-pantothenate biosynthesis; (R)-pantoate from 3-methyl-2-oxobutanoate: step 1/2. Catalyzes the reversible reaction in which hydroxymethyl group from 5,10-methylenetetrahydrofolate is transferred onto alpha-ketoisovalerate to form ketopantoate. The polypeptide is 3-methyl-2-oxobutanoate hydroxymethyltransferase (Azoarcus sp. (strain BH72)).